Reading from the N-terminus, the 271-residue chain is Ribosomal RNA small subunit methyltransferase A (271 aa).

S-adenosyl-L-methionine is bound by residues histidine 11, leucine 13, glycine 38, glutamate 58, aspartate 86, and asparagine 101.

It belongs to the class I-like SAM-binding methyltransferase superfamily. rRNA adenine N(6)-methyltransferase family. RsmA subfamily.

It is found in the cytoplasm. The enzyme catalyses adenosine(1518)/adenosine(1519) in 16S rRNA + 4 S-adenosyl-L-methionine = N(6)-dimethyladenosine(1518)/N(6)-dimethyladenosine(1519) in 16S rRNA + 4 S-adenosyl-L-homocysteine + 4 H(+). In terms of biological role, specifically dimethylates two adjacent adenosines (A1518 and A1519) in the loop of a conserved hairpin near the 3'-end of 16S rRNA in the 30S particle. May play a critical role in biogenesis of 30S subunits. The chain is Ribosomal RNA small subunit methyltransferase A from Helicobacter pylori (strain G27).